A 273-amino-acid polypeptide reads, in one-letter code: 2,3,4,5-tetrahydropyridine-2,6-dicarboxylate N-succinyltransferase (273 aa).

Residues arginine 104 and aspartate 141 each coordinate substrate.

The protein belongs to the transferase hexapeptide repeat family. As to quaternary structure, homotrimer.

It is found in the cytoplasm. The enzyme catalyses (S)-2,3,4,5-tetrahydrodipicolinate + succinyl-CoA + H2O = (S)-2-succinylamino-6-oxoheptanedioate + CoA. Its pathway is amino-acid biosynthesis; L-lysine biosynthesis via DAP pathway; LL-2,6-diaminopimelate from (S)-tetrahydrodipicolinate (succinylase route): step 1/3. The polypeptide is 2,3,4,5-tetrahydropyridine-2,6-dicarboxylate N-succinyltransferase (Nitrosomonas europaea (strain ATCC 19718 / CIP 103999 / KCTC 2705 / NBRC 14298)).